We begin with the raw amino-acid sequence, 369 residues long: Histone deacetylase-like amidohydrolase (369 aa).

Histidine 143 serves as the catalytic Proton donor/acceptor. Zn(2+) is bound by residues aspartate 180, histidine 182, and aspartate 268.

The protein belongs to the histone deacetylase family. In terms of assembly, homotetramer; dimer of dimers. Zn(2+) is required as a cofactor.

Zinc, and cobalt and nickel at a lesser extent, are able to increase the catalytic activity (2.2-, 1.3- and 1.1-fold respectively) at concentrations of 1 mM. Higher concentrations have an inhibitory effect. Magnesium, manganese and calcium have no effect on activity at concentrations between 0 and 10 mM. At 100 mM, the catalytic activity is increased between 1.2- and 2.1-fold. Hydroxamates like TSA and SAHA inhibit the enzyme. Is also inhibited by azobenzenes, stilbenes and arylazopyrazoles. Exhibits significant levels of protein deacetylase activity comparable to those of eukaryotic HDACs in assays both with fluorogenic peptidic substrates and acetate-radiolabeled histones. Accepts proteins with epsilon-acetylated lysine residues and tritiated-acetate-prelabeled chicken histones as substrates. The natural substrate protein is not yet known. The chain is Histone deacetylase-like amidohydrolase (hdaH) from Alcaligenes sp. (strain DSM 11172) (Bordetella sp. (strain FB188)).